Consider the following 160-residue polypeptide: RTX-II toxin-activating lysine-acyltransferase ApxIIC (160 aa).

Residues His23 and Asp92 contribute to the active site.

It belongs to the RTX toxin acyltransferase family. In terms of assembly, homodimer.

The protein resides in the cytoplasm. The enzyme catalyses a fatty acyl-[ACP] + L-lysyl-[protein] = N(6)-(fatty acyl)-L-lysyl-[protein] + holo-[ACP] + H(+). In terms of biological role, protein-lysine acyltransferase that catalyzes fatty acylation of the protoxin, thereby converting it to the active toxin. This chain is RTX-II toxin-activating lysine-acyltransferase ApxIIC (apxIIC), found in Actinobacillus pleuropneumoniae (Haemophilus pleuropneumoniae).